A 634-amino-acid polypeptide reads, in one-letter code: Biosynthetic arginine decarboxylase (634 aa).

Position 103 is an N6-(pyridoxal phosphate)lysine (Lys-103). Residue 283–293 (FDVGGGLGVDY) coordinates substrate.

Belongs to the Orn/Lys/Arg decarboxylase class-II family. SpeA subfamily. Requires Mg(2+) as cofactor. The cofactor is pyridoxal 5'-phosphate.

The catalysed reaction is L-arginine + H(+) = agmatine + CO2. It participates in amine and polyamine biosynthesis; agmatine biosynthesis; agmatine from L-arginine: step 1/1. Its function is as follows. Catalyzes the biosynthesis of agmatine from arginine. This Photorhabdus laumondii subsp. laumondii (strain DSM 15139 / CIP 105565 / TT01) (Photorhabdus luminescens subsp. laumondii) protein is Biosynthetic arginine decarboxylase.